The primary structure comprises 718 residues: Manganese-exporting P-type ATPase (718 aa).

In terms of domain architecture, HMA spans 11–78; that stretch reads GRMRVKVDWV…AIKGAAHVAA (68 aa). Helical transmembrane passes span 87–105, 128–146, 154–168, 177–191, 327–351, and 357–375; these read HSAE…GGVA, TVAT…RGAL, AGTD…VASL, LTVL…YLQD, VGEN…LITG, and MTML…TPTA. The active-site 4-aspartylphosphate intermediate is Asp408. Asp408, Thr410, and Asp610 together coordinate Mg(2+). The next 2 membrane-spanning stretches (helical) occupy residues 661–680 and 690–709; these read AVDV…AAGL and PVLA…ANSS.

This sequence belongs to the cation transport ATPase (P-type) (TC 3.A.3) family. Type IB subfamily.

It is found in the cell membrane. The catalysed reaction is Mn(2+)(in) + ATP + H2O = Mn(2+)(out) + ADP + phosphate + H(+). Its function is as follows. High affinity, slow turnover Mn(2+) transporting ATPase. This Mycobacterium bovis (strain ATCC BAA-935 / AF2122/97) protein is Manganese-exporting P-type ATPase (ctpC).